Reading from the N-terminus, the 421-residue chain is NADH-dependent phenylglyoxylate dehydrogenase subunit epsilon (421 aa).

FAD contacts are provided by residues 15 to 18, 39 to 40, and 279 to 297; these read SSHA, TR, and ATAQARGFFTGTKVMNAIL.

Belongs to the FAD-dependent oxidoreductase family. In terms of assembly, dimer of heteropentamers composed of an alpha (PadG), a beta (PadI), a gamma (PadE), a delta (PadF) and an epsilon (PadH) subunit. It depends on FAD as a cofactor.

The enzyme catalyses phenylglyoxylate + NAD(+) + CoA = benzoyl-CoA + CO2 + NADH. Its activity is regulated as follows. Activated by magnesium ions and thiamine diphosphate. In terms of biological role, involved in the anaerobic metabolism of phenylalanine and phenylacetate. Catalyzes the oxidative decarboxylation of phenylglyoxylate to benzoyl-CoA and CO(2). It can also react slowly with 2-oxo-3-methylbutanoate and use different electron acceptors such as benzyl viologen, methyl viologen, FAD or FMN, but NAD seems to be the physiological electron acceptor. Also catalyzes an isotope exchange between CO(2) and the carboxyl group which proves partial or complete reversibility of the oxidative decarboxylation reaction. The protein is NADH-dependent phenylglyoxylate dehydrogenase subunit epsilon (padH) of Aromatoleum evansii (Azoarcus evansii).